A 264-amino-acid polypeptide reads, in one-letter code: MEMO1 family protein Mbur_2394 (264 aa).

This sequence belongs to the MEMO1 family.

In Methanococcoides burtonii (strain DSM 6242 / NBRC 107633 / OCM 468 / ACE-M), this protein is MEMO1 family protein Mbur_2394.